Reading from the N-terminus, the 227-residue chain is NAD(P)H-quinone oxidoreductase subunit K, chloroplastic (227 aa).

Residues Cys-43, Cys-44, Cys-108, and Cys-139 each coordinate [4Fe-4S] cluster.

It belongs to the complex I 20 kDa subunit family. NDH is composed of at least 16 different subunits, 5 of which are encoded in the nucleus. [4Fe-4S] cluster is required as a cofactor.

The protein localises to the plastid. It localises to the chloroplast thylakoid membrane. It catalyses the reaction a plastoquinone + NADH + (n+1) H(+)(in) = a plastoquinol + NAD(+) + n H(+)(out). It carries out the reaction a plastoquinone + NADPH + (n+1) H(+)(in) = a plastoquinol + NADP(+) + n H(+)(out). Its function is as follows. NDH shuttles electrons from NAD(P)H:plastoquinone, via FMN and iron-sulfur (Fe-S) centers, to quinones in the photosynthetic chain and possibly in a chloroplast respiratory chain. The immediate electron acceptor for the enzyme in this species is believed to be plastoquinone. Couples the redox reaction to proton translocation, and thus conserves the redox energy in a proton gradient. The polypeptide is NAD(P)H-quinone oxidoreductase subunit K, chloroplastic (Pelargonium hortorum (Common geranium)).